The sequence spans 276 residues: Glutamate racemase (276 aa).

Residues 12-13 (DS) and 44-45 (YG) contribute to the substrate site. Cysteine 76 (proton donor/acceptor) is an active-site residue. Residue 77 to 78 (NT) participates in substrate binding. Catalysis depends on cysteine 187, which acts as the Proton donor/acceptor. 188 to 189 (TH) contributes to the substrate binding site.

It belongs to the aspartate/glutamate racemases family.

The enzyme catalyses L-glutamate = D-glutamate. Its pathway is cell wall biogenesis; peptidoglycan biosynthesis. In terms of biological role, provides the (R)-glutamate required for cell wall biosynthesis. The sequence is that of Glutamate racemase from Granulibacter bethesdensis (strain ATCC BAA-1260 / CGDNIH1).